Reading from the N-terminus, the 133-residue chain is Fatty acid-binding protein, heart (133 aa).

Val-2 carries the post-translational modification N-acetylvaline. A Phosphothreonine modification is found at Thr-8. A Phosphotyrosine; by Tyr-kinases modification is found at Tyr-20. Ser-23 is subject to Phosphoserine. Thr-30 carries the phosphothreonine modification. Phosphoserine is present on Ser-83. Residue 127–129 (RTY) participates in (9Z)-octadecenoate binding. 127-129 (RTY) is a binding site for hexadecanoate. 127-129 (RTY) serves as a coordination point for octadecanoate.

Belongs to the calycin superfamily. Fatty-acid binding protein (FABP) family.

It is found in the cytoplasm. Its function is as follows. FABPs are thought to play a role in the intracellular transport of long-chain fatty acids and their acyl-CoA esters. In Homo sapiens (Human), this protein is Fatty acid-binding protein, heart (FABP3).